We begin with the raw amino-acid sequence, 483 residues long: Aspartyl/glutamyl-tRNA(Asn/Gln) amidotransferase subunit B (483 aa).

Belongs to the GatB/GatE family. GatB subfamily. In terms of assembly, heterotrimer of A, B and C subunits.

It carries out the reaction L-glutamyl-tRNA(Gln) + L-glutamine + ATP + H2O = L-glutaminyl-tRNA(Gln) + L-glutamate + ADP + phosphate + H(+). The catalysed reaction is L-aspartyl-tRNA(Asn) + L-glutamine + ATP + H2O = L-asparaginyl-tRNA(Asn) + L-glutamate + ADP + phosphate + 2 H(+). Allows the formation of correctly charged Asn-tRNA(Asn) or Gln-tRNA(Gln) through the transamidation of misacylated Asp-tRNA(Asn) or Glu-tRNA(Gln) in organisms which lack either or both of asparaginyl-tRNA or glutaminyl-tRNA synthetases. The reaction takes place in the presence of glutamine and ATP through an activated phospho-Asp-tRNA(Asn) or phospho-Glu-tRNA(Gln). The chain is Aspartyl/glutamyl-tRNA(Asn/Gln) amidotransferase subunit B from Thermomicrobium roseum (strain ATCC 27502 / DSM 5159 / P-2).